We begin with the raw amino-acid sequence, 545 residues long: CTP synthase (545 aa).

The interval 1-266 is amidoligase domain; it reads MTTKYIFVTG…DEICVKRFGL (266 aa). Ser14 is a CTP binding site. Residue Ser14 coordinates UTP. ATP contacts are provided by residues 15–20 and Asp72; that span reads SLGKGI. The Mg(2+) site is built by Asp72 and Glu140. Residues 147–149, 187–192, and Lys223 contribute to the CTP site; these read DIE and KTKPTQ. UTP contacts are provided by residues 187–192 and Lys223; that span reads KTKPTQ. Position 239–241 (239–241) interacts with ATP; it reads RDV. One can recognise a Glutamine amidotransferase type-1 domain in the interval 291-542; that stretch reads IIGMVGKYTE…IKSAIDHQQG (252 aa). Position 352 (Gly352) interacts with L-glutamine. Cys379 serves as the catalytic Nucleophile; for glutamine hydrolysis. L-glutamine-binding positions include 380 to 383, Glu403, and Arg470; that span reads LGMQ. Residues His515 and Glu517 contribute to the active site.

Belongs to the CTP synthase family. Homotetramer.

The catalysed reaction is UTP + L-glutamine + ATP + H2O = CTP + L-glutamate + ADP + phosphate + 2 H(+). The enzyme catalyses L-glutamine + H2O = L-glutamate + NH4(+). It carries out the reaction UTP + NH4(+) + ATP = CTP + ADP + phosphate + 2 H(+). It participates in pyrimidine metabolism; CTP biosynthesis via de novo pathway; CTP from UDP: step 2/2. With respect to regulation, allosterically activated by GTP, when glutamine is the substrate; GTP has no effect on the reaction when ammonia is the substrate. The allosteric effector GTP functions by stabilizing the protein conformation that binds the tetrahedral intermediate(s) formed during glutamine hydrolysis. Inhibited by the product CTP, via allosteric rather than competitive inhibition. Catalyzes the ATP-dependent amination of UTP to CTP with either L-glutamine or ammonia as the source of nitrogen. Regulates intracellular CTP levels through interactions with the four ribonucleotide triphosphates. In Psychromonas ingrahamii (strain DSM 17664 / CCUG 51855 / 37), this protein is CTP synthase.